We begin with the raw amino-acid sequence, 139 residues long: Ribulose bisphosphate carboxylase small subunit (139 aa).

The protein belongs to the RuBisCO small chain family. Heterohexadecamer of 8 large and 8 small subunits.

The protein resides in the plastid. Its subcellular location is the chloroplast. Its function is as follows. RuBisCO catalyzes two reactions: the carboxylation of D-ribulose 1,5-bisphosphate, the primary event in carbon dioxide fixation, as well as the oxidative fragmentation of the pentose substrate in the photorespiration process. Both reactions occur simultaneously and in competition at the same active site. Although the small subunit is not catalytic it is essential for maximal activity. This chain is Ribulose bisphosphate carboxylase small subunit, found in Detonula confervacea (Marine diatom).